Here is a 673-residue protein sequence, read N- to C-terminus: MASSPGLDPHPLPMLQLQEVGSSKVSERPRSPGLLPAVYSPPLGMDSHTVCIPSPYTDSSHEYNHSHGPLTFYSPSVLSYSRPPITNSPSSLCPSLSPSAFWPSHNHPTMPSLTLHCPESIVYNEPSPHAPWLESKAHSINASSSSIIGCNKSLVKRSEEGVEDMNSSLCSSAVGKADMHFCAVCHDYASGYHYGVWSCEGCKAFFKRSIQGHNDYICPATNQCTIDKNRRKSCQACRLRKCYEVGMMKCGVRRERCSYRGARHRRGGLQPRDPTGRGLVRVGLGSRAQRHLHLEAPLTPLAPILQAKHVHLSAMSPEEFISRIMDAEPPEIYLMEDLKKPFTEASMMMSLTNLADKELVFMISWAKKIPGFVELSLADQINLLKCCWLEILMLGLMWRSVDHPGKLIFSPDFKLNREEGQCVEGIMEIFDMLLAGTSRFRELKLQREEYVCLKAMILLNSNLCTSSPQTAEELESRNKLLRLLDSVIDALVWAISKMGLTTQQQTLRLGHLTMLLSHIRHVSNKGMDHLSTMKRKNVVLVYDLLLEMLDANTSSGGSQPSSSPSSETYSDQHQYPQPPSHLHPGSEQTTADHAIVPPLGPTDDPILDGHLDAMPLQSSPPFQSLVVPHMDTNDYIHPEQWSLGTGDAAPSVEPTDYITTERVVMETALVTQP.

A modulating region spans residues 1–181 (MASSPGLDPH…SAVGKADMHF (181 aa)). 2 consecutive NR C4-type zinc fingers follow at residues 182–202 (CAVC…CEGC) and 218–242 (CPAT…LRKC). Positions 182–247 (CAVCHDYASG…RLRKCYEVGM (66 aa)) form a DNA-binding region, nuclear receptor. The region spanning 316–552 (SPEEFISRIM…DLLLEMLDAN (237 aa)) is the NR LBD domain. The segment at 553-602 (TSSGGSQPSSSPSSETYSDQHQYPQPPSHLHPGSEQTTADHAIVPPLGPT) is disordered. Low complexity predominate over residues 554–566 (SSGGSQPSSSPSS).

The protein belongs to the nuclear hormone receptor family. NR3 subfamily. Binds DNA as a homodimer. Can form a heterodimer with ER-alpha. As to expression, abundant in the liver and testes, less abundant in the ovary and barely detectable in the muscle.

The protein resides in the nucleus. In terms of biological role, binds estrogens with an affinity similar to that of ER-alpha, and activates expression of reporter genes containing estrogen response elements (ERE) in an estrogen-dependent manner. The sequence is that of Estrogen receptor beta (esr2) from Micropogonias undulatus (Atlantic croaker).